Reading from the N-terminus, the 645-residue chain is Protein FAM47B (645 aa).

Basic and acidic residues-rich tracts occupy residues 1-11, 238-251, and 288-299; these read MGDRRPQDRPR, EPPE…RVDP, and PETRVSHLHPEP. Disordered stretches follow at residues 1–23 and 168–321; these read MGDR…WYCD and AREK…SLCP.

The protein belongs to the FAM47 family.

The chain is Protein FAM47B (FAM47B) from Homo sapiens (Human).